The sequence spans 146 residues: UPF0260 protein VF_1660 (146 aa).

This sequence belongs to the UPF0260 family.

This chain is UPF0260 protein VF_1660, found in Aliivibrio fischeri (strain ATCC 700601 / ES114) (Vibrio fischeri).